The following is a 513-amino-acid chain: ATP synthase subunit alpha (513 aa).

Residue 169–176 (GDRQTGKT) coordinates ATP.

This sequence belongs to the ATPase alpha/beta chains family. In terms of assembly, F-type ATPases have 2 components, CF(1) - the catalytic core - and CF(0) - the membrane proton channel. CF(1) has five subunits: alpha(3), beta(3), gamma(1), delta(1), epsilon(1). CF(0) has three main subunits: a(1), b(2) and c(9-12). The alpha and beta chains form an alternating ring which encloses part of the gamma chain. CF(1) is attached to CF(0) by a central stalk formed by the gamma and epsilon chains, while a peripheral stalk is formed by the delta and b chains.

The protein resides in the cell inner membrane. It carries out the reaction ATP + H2O + 4 H(+)(in) = ADP + phosphate + 5 H(+)(out). Functionally, produces ATP from ADP in the presence of a proton gradient across the membrane. The alpha chain is a regulatory subunit. The sequence is that of ATP synthase subunit alpha from Ruthia magnifica subsp. Calyptogena magnifica.